Consider the following 102-residue polypeptide: uncharacterized protein (102 aa).

The N-terminal stretch at 1–41 (MLFLDSYSLLIQFQRFKNWESPRRFSSSFPLLLFVFKPIFA) is a signal peptide.

This is an uncharacterized protein from Saccharomyces cerevisiae (strain ATCC 204508 / S288c) (Baker's yeast).